The following is a 457-amino-acid chain: Methanethiol oxidase (457 aa).

This sequence belongs to the selenium-binding protein family.

It is found in the nucleus. The protein localises to the cytoplasm. Its subcellular location is the cytosol. The protein resides in the membrane. The catalysed reaction is methanethiol + O2 + H2O = hydrogen sulfide + formaldehyde + H2O2 + H(+). Its pathway is organosulfur degradation. In terms of biological role, catalyzes the oxidation of methanethiol, an organosulfur compound known to be produced in substantial amounts by gut bacteria. Selenium-binding protein which may be involved in the sensing of reactive xenobiotics in the cytoplasm. May be involved in intra-Golgi protein transport. The protein is Methanethiol oxidase (selenbp1) of Danio rerio (Zebrafish).